We begin with the raw amino-acid sequence, 118 residues long: Fluoride-specific ion channel FluC 1 (118 aa).

Transmembrane regions (helical) follow at residues 5-25, 39-59, 61-81, and 98-118; these read FLLV…ISIF, FFIN…ALGP, WQLF…TFKV, and YVGL…MLGV. Residues Gly71 and Thr74 each contribute to the Na(+) site.

Belongs to the fluoride channel Fluc/FEX (TC 1.A.43) family.

It is found in the cell membrane. The enzyme catalyses fluoride(in) = fluoride(out). Its activity is regulated as follows. Na(+) is not transported, but it plays an essential structural role and its presence is essential for fluoride channel function. In terms of biological role, fluoride-specific ion channel. Important for reducing fluoride concentration in the cell, thus reducing its toxicity. This chain is Fluoride-specific ion channel FluC 1, found in Listeria innocua serovar 6a (strain ATCC BAA-680 / CLIP 11262).